The sequence spans 327 residues: DNA repair protein XRCC4 (327 aa).

Positions 1-211 are interaction with IFFO1; sequence MERKVSRISL…QLEKNLKPER (211 aa). S53 is modified (phosphoserine). Coiled-coil stretches lie at residues 133 to 153 and 183 to 213; these read IAEK…LLRD and LNEK…ERET. 2 interaction with LIG4 regions span residues 179 to 210 and 179 to 211; these read FILV…LKPE and FILV…KPER. Phosphoserine is present on S192. K208 participates in a covalent cross-link: Glycyl lysine isopeptide (Lys-Gly) (interchain with G-Cter in SUMO). Y226 is subject to Phosphotyrosine. The residue at position 229 (S229) is a Phosphoserine. T230 carries the post-translational modification Phosphothreonine. Phosphoserine occurs at positions 249 and 253. The disordered stretch occupies residues 255-327; it reads DVTDIAPSRK…RNSSPEDIFD (73 aa). The Nuclear localization signal signature appears at 263 to 268; it reads RKRRHH. A Glycyl lysine isopeptide (Lys-Gly) (interchain with G-Cter in ubiquitin) cross-link involves residue K289. S294, S295, S308, and S313 each carry phosphoserine. Residues 308–327 show a composition bias toward polar residues; sequence SAGNMSLETLRNSSPEDIFD. Position 316 is a phosphothreonine (T316). Phosphoserine is present on residues S320 and S321.

This sequence belongs to the XRCC4-XLF family. XRCC4 subfamily. As to quaternary structure, homodimer and homotetramer in solution. Interacts with NHEJ1/XLF; the interaction is direct and is mediated via a head-to-head interaction between N-terminal head regions. Interacts with LIG4; the LIG4-XRCC4 subcomplex has a 1:2 stoichiometry and XRCC4 is required for LIG4 stability. Component of the core long-range non-homologous end joining (NHEJ) complex (also named DNA-PK complex) composed of PRKDC, LIG4, XRCC4, XRCC6/Ku70, XRCC5/Ku86 and NHEJ1/XLF. Additional component of the NHEJ complex includes PAXX. Following autophosphorylation, PRKDC dissociates from DNA, leading to formation of the short-range NHEJ complex, composed of LIG4, XRCC4, XRCC6/Ku70, XRCC5/Ku86 and NHEJ1/XLF. Interacts with PRKDC; the interaction is direct. Interacts with XRCC6/Ku70; the interaction is direct. Interacts with APTX and APLF. Forms a heterotetramer with IFFO1; the interaction involves LIG4-free XRCC4 and leads to the relocalization of IFFO1 to the sites of DNA damage. Interacts with PNKP; mainly interacts with PNKP when phosphorylated at Thr-230, but is also able to interact at much lower level with PNKP when not unphosphorylated. Interacts with POLL (DNA polymerase lambda). In terms of assembly, interacts with XKR4; interacts with the processed form of XKR4, which is cleaved by caspase. Phosphorylated by PRKDC at the C-terminus in response to DNA damage; Ser-253 constitutes the main phosphorylation sites. Phosphorylations by PRKDC at the C-terminus of XRCC4 and NHEJ1/XLF are highly redundant and regulate ability of the XRCC4-NHEJ1/XLF subcomplex to bridge DNA. Phosphorylation by PRKDC does not prevent interaction with NHEJ1/XLF but disrupts ability to bridge DNA and promotes detachment from DNA. Phosphorylation at Ser-320 and Ser-321 by PRKDC promotes recognition by the SCF(FBXW7) complex and subsequent ubiquitination via 'Lys-63'-linked ubiquitin. Phosphorylation at Thr-230 by CK2 promotes interaction with PNKP; regulating PNKP activity and localization to DNA damage sites. Phosphorylation by CK2 promotes interaction with APTX. In terms of processing, ubiquitinated at Lys-289 by the SCF(FBXW7) complex via 'Lys-63'-linked ubiquitination, thereby promoting double-strand break repair: the SCF(FBXW7) complex specifically recognizes XRCC4 when phosphorylated at Ser-320 and Ser-321 by PRKDC, and 'Lys-63'-linked ubiquitination facilitates DNA non-homologous end joining (NHEJ) by enhancing association with XRCC5/Ku80 and XRCC6/Ku70. Monoubiquitinated. Post-translationally, undergoes proteolytic processing by caspase-3 (CASP3). This generates the protein XRCC4, C-terminus (XRCC4/C), which translocates to the cytoplasm and activates phospholipid scramblase activity of XKR4, thereby promoting phosphatidylserine exposure on apoptotic cell surface.

It localises to the nucleus. It is found in the chromosome. The protein localises to the cytoplasm. In terms of biological role, DNA non-homologous end joining (NHEJ) core factor, required for double-strand break repair and V(D)J recombination. Acts as a scaffold protein that regulates recruitment of other proteins to DNA double-strand breaks (DSBs). Associates with NHEJ1/XLF to form alternating helical filaments that bridge DNA and act like a bandage, holding together the broken DNA until it is repaired. The XRCC4-NHEJ1/XLF subcomplex binds to the DNA fragments of a DSB in a highly diffusive manner and robustly bridges two independent DNA molecules, holding the broken DNA fragments in close proximity to one other. The mobility of the bridges ensures that the ends remain accessible for further processing by other repair factors. Plays a key role in the NHEJ ligation step of the broken DNA during DSB repair via direct interaction with DNA ligase IV (LIG4): the LIG4-XRCC4 subcomplex reseals the DNA breaks after the gap filling is completed. XRCC4 stabilizes LIG4, regulates its subcellular localization and enhances LIG4's joining activity. Binding of the LIG4-XRCC4 subcomplex to DNA ends is dependent on the assembly of the DNA-dependent protein kinase complex DNA-PK to these DNA ends. Promotes displacement of PNKP from processed strand break termini. Functionally, acts as an activator of the phospholipid scramblase activity of XKR4. This form, which is generated upon caspase-3 (CASP3) cleavage, translocates into the cytoplasm and interacts with XKR4, thereby promoting phosphatidylserine scramblase activity of XKR4 and leading to phosphatidylserine exposure on apoptotic cell surface. This Cricetulus griseus (Chinese hamster) protein is DNA repair protein XRCC4.